A 276-amino-acid polypeptide reads, in one-letter code: Undecaprenyl-diphosphatase (276 aa).

Helical transmembrane passes span 1 to 21 (MSWL…FLPV), 39 to 59 (AGAS…LIYF), 84 to 104 (YRLG…GLLF), 115 to 135 (LWLV…AEYY), 159 to 179 (LALM…LFLG), 188 to 208 (FGFL…LPDA), 222 to 242 (QLIV…AWFL), and 253 to 273 (FVGY…TGVL).

This sequence belongs to the UppP family.

The protein localises to the cell membrane. The catalysed reaction is di-trans,octa-cis-undecaprenyl diphosphate + H2O = di-trans,octa-cis-undecaprenyl phosphate + phosphate + H(+). Catalyzes the dephosphorylation of undecaprenyl diphosphate (UPP). Confers resistance to bacitracin. This chain is Undecaprenyl-diphosphatase, found in Mycolicibacterium smegmatis (strain ATCC 700084 / mc(2)155) (Mycobacterium smegmatis).